A 75-amino-acid polypeptide reads, in one-letter code: M-myrmeciitoxin-Mp2a (75 aa).

The first 26 residues, 1 to 26 (MKLSCLLLTLAIIFVLTIVHAPNVEA), serve as a signal peptide directing secretion. Residues 27 to 48 (KALADPESDAVGFADAVGEADP) constitute a propeptide that is removed on maturation. Position 74 is a leucine amide (leucine 74).

Belongs to the formicidae venom precursor-01 superfamily. Ant pilosulin family. As to quaternary structure, heterodimer with M-MIITX-Mp2b (pilosin-3b) (AC P0C023); disulfide-linked. Only heterodimers (and not monomers) have been identified in the venom. As to expression, expressed by the venom gland.

It is found in the secreted. Heterodimer protein that may serve both defensive (pain-inducing) and predatory (insecticidal) roles. Has membrane-disrupting activity and shows induction of non-specific calcium influx into cells,. Shows broad-spectrum activity against a diverse range of bacteria, and cell lines, as well as hemolytic activity (EC(50)=2.18 uM). In vivo, shows moderate insecticidal activity against D.melanogaster and potent anthelmintic activity against the veterinary nematode H.contortus. In addition, intraplantar injection into mice induces nocifensive behavior and mechanical allodynia. The chain is M-myrmeciitoxin-Mp2a from Myrmecia pilosula (Jack jumper ant).